We begin with the raw amino-acid sequence, 208 residues long: Putative 3-methyladenine DNA glycosylase (208 aa).

A disordered region spans residues 1-20 (MGRAHTVSRGEDHPPIARSE).

This sequence belongs to the DNA glycosylase MPG family.

The protein is Putative 3-methyladenine DNA glycosylase of Mesorhizobium japonicum (strain LMG 29417 / CECT 9101 / MAFF 303099) (Mesorhizobium loti (strain MAFF 303099)).